The following is a 114-amino-acid chain: Ribonuclease P protein component (114 aa).

This sequence belongs to the RnpA family. In terms of assembly, consists of a catalytic RNA component (M1 or rnpB) and a protein subunit.

It carries out the reaction Endonucleolytic cleavage of RNA, removing 5'-extranucleotides from tRNA precursor.. Functionally, RNaseP catalyzes the removal of the 5'-leader sequence from pre-tRNA to produce the mature 5'-terminus. It can also cleave other RNA substrates such as 4.5S RNA. The protein component plays an auxiliary but essential role in vivo by binding to the 5'-leader sequence and broadening the substrate specificity of the ribozyme. This is Ribonuclease P protein component from Staphylococcus haemolyticus (strain JCSC1435).